We begin with the raw amino-acid sequence, 442 residues long: tRNA modification GTPase MnmE (442 aa).

(6S)-5-formyl-5,6,7,8-tetrahydrofolate contacts are provided by R27, E84, and K124. A TrmE-type G domain is found at 221 to 366; the sequence is GLHVVIVGAP…LLDALQAFAE (146 aa). GTP is bound by residues 231-236, 250-256, and 275-278; these read NAGKSS, SEEAGTT, and DTAG. Mg(2+) contacts are provided by S235 and T256. K442 is a (6S)-5-formyl-5,6,7,8-tetrahydrofolate binding site.

The protein belongs to the TRAFAC class TrmE-Era-EngA-EngB-Septin-like GTPase superfamily. TrmE GTPase family. Homodimer. Heterotetramer of two MnmE and two MnmG subunits. It depends on K(+) as a cofactor.

The protein localises to the cytoplasm. Its function is as follows. Exhibits a very high intrinsic GTPase hydrolysis rate. Involved in the addition of a carboxymethylaminomethyl (cmnm) group at the wobble position (U34) of certain tRNAs, forming tRNA-cmnm(5)s(2)U34. The sequence is that of tRNA modification GTPase MnmE from Brucella suis (strain ATCC 23445 / NCTC 10510).